The following is a 450-amino-acid chain: Coiled-coil domain-containing protein 149-A (450 aa).

Coiled coils occupy residues Met-1–Lys-197 and Ile-259–Ser-286. The tract at residues Ser-290–Glu-358 is disordered. Polar residues predominate over residues Pro-343–Thr-354.

This sequence belongs to the CCDC149 family.

In Danio rerio (Zebrafish), this protein is Coiled-coil domain-containing protein 149-A (ccdc149a).